A 268-amino-acid polypeptide reads, in one-letter code: MSADSRAEVVLHAEAVTKRFGATLALDAVSMTVHRSELVVLLGLSGSGKSTLLRCFNGLHPVTSGAVTVAGTRVDTAPRATVRALRRDIGFVFQQFNLVGRLSCLDNVLLGGLARLRLPRYGALTYPKRMRAEAVAHLDRVGLADLAHRRTDTLSGGQQQRVAIARTLMQRPKLVLADEPVASLDPENAGVVMDLLFRICLEDNLTVVCTLHQVDLALGWAHRVIGLRDGRKVFDRPAAGLSRDEVMAIYQRAEVTRSAPAGLAAGAL.

An ABC transporter domain is found at 11 to 254; the sequence is LHAEAVTKRF…EVMAIYQRAE (244 aa). 43 to 50 lines the ATP pocket; sequence GLSGSGKS.

The protein belongs to the ABC transporter superfamily. Phosphonates importer (TC 3.A.1.9.1) family. As to quaternary structure, the complex is composed of two ATP-binding proteins (PhnC), two transmembrane proteins (PhnE) and a solute-binding protein (PhnD).

The protein resides in the cell membrane. It carries out the reaction phosphonate(out) + ATP + H2O = phosphonate(in) + ADP + phosphate + H(+). Part of the ABC transporter complex PhnCDE involved in phosphonates import. Responsible for energy coupling to the transport system. The chain is Phosphonates import ATP-binding protein PhnC from Nocardia farcinica (strain IFM 10152).